Here is a 653-residue protein sequence, read N- to C-terminus: Laccase ustL (653 aa).

A signal peptide spans 1-20; that stretch reads MTSLTGLALLLCVLASQSWA. 2 consecutive Plastocyanin-like domains span residues 31-143 and 173-362; these read WEKG…RPKR and VLSD…ATQV. N-linked (GlcNAc...) asparagine glycosylation is found at asparagine 74, asparagine 220, asparagine 235, asparagine 255, asparagine 277, asparagine 405, asparagine 463, and asparagine 479. The 132-residue stretch at 463–594 folds into the Plastocyanin-like 3 domain; it reads NQTVGTEDEK…GGMSIALLDG (132 aa). Cu cation is bound by residues histidine 501, histidine 504, histidine 506, histidine 576, cysteine 577, histidine 578, and histidine 582. N-linked (GlcNAc...) asparagine glycosylation is present at asparagine 623.

Belongs to the multicopper oxidase family.

The catalysed reaction is 4 norrubrofusarin + O2 = 2 ustilaginoidin A + 2 H2O. Its pathway is secondary metabolite biosynthesis. Laccase; part of the gene cluster that mediates the biosynthesis of ustilaginoidins, dimeric gamma-naphthopyrones isolated from different fungal species. The first step in the biosynthesis of ustilaginoidins is the production of gamma-naphthopyrone precursor YWA1 by the non-reducing polyketide synthase ustP, via condensation of one acetyl-CoA starter unit with 6 malonyl-CoA units. YWA1 is then probably substrate of the ustZ to yield norrubrofusarin via a dehydration reaction. A key enzyme in the biosynthetic pathway is the laccase ustL, which catalyzes the oxidative dimerization of norrubrofusarin to ustilaginoidin A. It can produce the M- and P-atropisomers in varying amounts, depending on the reaction conditions. For the biosynthesis of 3-methylustilaginoid in derivatives such as chaetochromin A, a methylated derivative of YWA1 is required. The C-methylation is considered to be catalyzed by ustM, the phosphopantetheine attachment site of which indicates that it acts on the growing polyketide chain before release of the product. For the biosynthesis of chaetochromin A, it is assumed that saturation of the D2 double bond takes place before dimerization, and is probably catalyzed by an external reductase because no candidate gene was identified within the cluster. This Ustilaginoidea virens (Rice false smut fungus) protein is Laccase ustL.